A 463-amino-acid polypeptide reads, in one-letter code: Dopaminechrome tautomerase (463 aa).

This sequence belongs to the major royal jelly protein family.

The protein resides in the secreted. The catalysed reaction is dopaminechrome = 5,6-dihydroxyindole. Its pathway is pigment biosynthesis; melanin biosynthesis. Its function is as follows. Catalyzes the conversion of dopaminechrome to 5,6-dihydroxyindole in the eumelanin biosynthetic pathway originating from dopamine. Catalyzes tautomerization of dopaminechrome to 5,6-dihydroxyindole during eumelanin biosynthesis. Acts both dopaminechrome and N-methyl dopaminechrome but not on dopachrome or other aminochromes tested. This chain is Dopaminechrome tautomerase, found in Drosophila melanogaster (Fruit fly).